The chain runs to 149 residues: Protein FAM72A (149 aa).

Belongs to the FAM72 family. In terms of assembly, interacts with UNG. In terms of tissue distribution, expressed at high levels in stomach and also in kidney and, at low levels, in heart (at protein level). In the stomach, highly expressed in foveolar cells, parietal cells and chief cells (at protein level). In kidney, expressed in endothelial cells, mesangial and epithelial cells (parietal and visceral epithelium) around glomerulus (at protein level).

It localises to the cytoplasm. It is found in the mitochondrion. Functionally, may play a role in the regulation of cellular reactive oxygen species metabolism. May participate in cell growth regulation. The protein is Protein FAM72A (Fam72a) of Rattus norvegicus (Rat).